A 391-amino-acid chain; its full sequence is Chorismate synthase (391 aa).

NADP(+) is bound at residue R48. FMN contacts are provided by residues 126-128, G286, 301-305, and R328; these read RAS and KPTSS.

It belongs to the chorismate synthase family. The cofactor is FMNH2.

It carries out the reaction 5-O-(1-carboxyvinyl)-3-phosphoshikimate = chorismate + phosphate. The protein operates within metabolic intermediate biosynthesis; chorismate biosynthesis; chorismate from D-erythrose 4-phosphate and phosphoenolpyruvate: step 7/7. Its function is as follows. Catalyzes the anti-1,4-elimination of the C-3 phosphate and the C-6 proR hydrogen from 5-enolpyruvylshikimate-3-phosphate (EPSP) to yield chorismate, which is the branch point compound that serves as the starting substrate for the three terminal pathways of aromatic amino acid biosynthesis. This reaction introduces a second double bond into the aromatic ring system. The chain is Chorismate synthase from Saccharolobus islandicus (strain M.16.27) (Sulfolobus islandicus).